Here is a 196-residue protein sequence, read N- to C-terminus: Large ribosomal subunit protein bL25 (196 aa).

This sequence belongs to the bacterial ribosomal protein bL25 family. CTC subfamily. As to quaternary structure, part of the 50S ribosomal subunit; part of the 5S rRNA/L5/L18/L25 subcomplex. Contacts the 5S rRNA. Binds to the 5S rRNA independently of L5 and L18.

Functionally, this is one of the proteins that binds to the 5S RNA in the ribosome where it forms part of the central protuberance. The sequence is that of Large ribosomal subunit protein bL25 from Bacteroides fragilis (strain ATCC 25285 / DSM 2151 / CCUG 4856 / JCM 11019 / LMG 10263 / NCTC 9343 / Onslow / VPI 2553 / EN-2).